We begin with the raw amino-acid sequence, 288 residues long: MKIAIIQYSTYGHITQLAKAVQKGVADAGYKADIFQVPETLPQEVLDKMHAPAKPTDIPIATNDTLTEYDAFLFGVPTRYGTAPAQFFEFWGATGGLWANGSLAGKPAGVFVSTSGQGGGQETTVRNFLNFLAHHGMPYIPLGYANAFALQSSMEEVHGGSPYGAGTFANVDGSRQPSTLELEIAEKQGEAFVKSATKLVKGSKKTNTTTTSKSAATSDAAGTTSGTAAGTSAATGAATGTSAPKESTKEASSSAKKEATNGTATRTQQSTKAPETAEKSSCSKCIIM.

The Flavodoxin-like domain maps to 3-192; it reads IAIIQYSTYG…EIAEKQGEAF (190 aa). FMN is bound by residues 9-13 and 110-164; these read STYGH and VFVS…SPYG. Residues 202 to 288 are disordered; the sequence is GSKKTNTTTT…KSSCSKCIIM (87 aa). Over residues 205–254 the composition is skewed to low complexity; sequence KTNTTTTSKSAATSDAAGTTSGTAAGTSAATGAATGTSAPKESTKEASSS. A compositionally biased stretch (polar residues) spans 261 to 288; sequence NGTATRTQQSTKAPETAEKSSCSKCIIM.

The protein belongs to the WrbA family. FMN is required as a cofactor.

It is found in the cell membrane. It catalyses the reaction a quinone + NADH + H(+) = a quinol + NAD(+). The catalysed reaction is a quinone + NADPH + H(+) = a quinol + NADP(+). Functionally, flavodoxin-like protein (FLP) that plays a role in cell wall integrity, oxidative stress protection and virulence. FLPs act as NAD(P)H quinone oxidoreductases. Reduces ubiquinone (coenzyme Q), enabling it to serve as an antioxidant in the membrane. The protein is NAD(P)H quinone oxidoreductase YCP4 of Candida albicans (strain SC5314 / ATCC MYA-2876) (Yeast).